The sequence spans 141 residues: Ribosome-binding factor A (141 aa).

It belongs to the RbfA family. In terms of assembly, monomer. Binds 30S ribosomal subunits, but not 50S ribosomal subunits or 70S ribosomes.

The protein resides in the cytoplasm. One of several proteins that assist in the late maturation steps of the functional core of the 30S ribosomal subunit. Associates with free 30S ribosomal subunits (but not with 30S subunits that are part of 70S ribosomes or polysomes). Required for efficient processing of 16S rRNA. May interact with the 5'-terminal helix region of 16S rRNA. This Afipia carboxidovorans (strain ATCC 49405 / DSM 1227 / KCTC 32145 / OM5) (Oligotropha carboxidovorans) protein is Ribosome-binding factor A.